A 263-amino-acid chain; its full sequence is Ribonuclease HII (263 aa).

The RNase H type-2 domain occupies 71 to 262 (QAIAGIDEVG…VKSMCCDSTN (192 aa)). A divalent metal cation-binding residues include Asp-77, Glu-78, and Asp-172.

It belongs to the RNase HII family. Requires Mn(2+) as cofactor. The cofactor is Mg(2+).

It localises to the cytoplasm. The catalysed reaction is Endonucleolytic cleavage to 5'-phosphomonoester.. Its function is as follows. Endonuclease that specifically degrades the RNA of RNA-DNA hybrids. This Streptococcus pyogenes serotype M4 (strain MGAS10750) protein is Ribonuclease HII.